The chain runs to 586 residues: Protein cereblon (586 aa).

Disordered stretches follow at residues 1 to 114 (MDDE…LPRW) and 158 to 194 (SQERRRSRTSEETSQEDVEQPEDPPPQQPPRPPIDIG). Residues 14–37 (GRDEDVQLEDHSQAQGLQDRRVDA) are compositionally biased toward basic and acidic residues. The segment covering 75–85 (MVEDGLQDDTA) has biased composition (acidic residues). The segment covering 86-96 (SEGSHPSSDMS) has biased composition (polar residues). Positions 159-168 (QERRRSRTSE) are enriched in basic and acidic residues. Positions 170-179 (TSQEDVEQPE) are enriched in acidic residues. Positions 180 to 190 (DPPPQQPPRPP) are enriched in pro residues. The 227-residue stretch at 226–452 (HMLIFLHQHI…LIKSTFTDES (227 aa)) folds into the Lon N-terminal domain. Residues 451–560 (ESLFFCRYCN…LAGSSVRIGK (110 aa)) form the CULT domain. Zn(2+) is bound by residues Cys456, Cys459, Cys525, and Cys528.

Belongs to the CRBN family. In terms of assembly, likely a component of a DCX (DDB1-CUL4-X-box) protein ligase complex. May interact with pic/DDB1. In terms of processing, ubiquitinated.

The protein resides in the nucleus. Its pathway is protein modification; protein ubiquitination. Functionally, substrate recognition component of a DCX (DDB1-CUL4-X-box) E3 protein ligase complex that mediates the ubiquitination and subsequent proteasomal degradation of target proteins. Has an essential role in mediating growth by negatively regulating insulin signaling. It also has a role in maintaining presynaptic function in the neuromuscular junction synapses of third-instar larvae. The protein is Protein cereblon of Drosophila erecta (Fruit fly).